Reading from the N-terminus, the 130-residue chain is Small ribosomal subunit protein uS11c (130 aa).

Belongs to the universal ribosomal protein uS11 family. Part of the 30S ribosomal subunit.

The protein localises to the plastid. It localises to the chloroplast. The polypeptide is Small ribosomal subunit protein uS11c (Phaeodactylum tricornutum (strain CCAP 1055/1)).